A 413-amino-acid chain; its full sequence is Docking protein 2 (413 aa).

Residues 4 to 114 enclose the PH domain; sequence VVVKQGFLYL…WIQAICLLAF (111 aa). Residues 147-252 form the IRS-type PTB domain; sequence PQKEFAVTVR…SAQKNAAPPG (106 aa). Positions 247 to 292 are disordered; the sequence is NAAPPGPQTQPVPVPAVLPRPESPYARPHDSLPPPSPTVPVPTPRQ. Residues 250-268 are compositionally biased toward pro residues; it reads PPGPQTQPVPVPAVLPRPE. Tyr-271 carries the phosphotyrosine modification. The span at 277 to 289 shows a compositional bias: pro residues; it reads SLPPPSPTVPVPT. Residues Tyr-300 and Tyr-346 each carry the phosphotyrosine modification. A compositionally biased stretch (basic and acidic residues) spans 362–381; that stretch reads QEPRGEAWRRQATADRDSSG. The segment at 362-383 is disordered; that stretch reads QEPRGEAWRRQATADRDSSGLK.

It belongs to the DOK family. Type A subfamily. As to quaternary structure, interacts with phosphorylated RASGAP and EGFR. Interacts with RET and NCK. Interacts (via PH domain) with TEK/TIE2 (tyrosine phosphorylated). On immunoreceptor stimulation, phosphorylated on C-terminal tyrosine residues. Phosphorylation on Tyr-346 is required for binding to the SH2 domain of NCK. Phosphorylation on both Tyr-271 and Tyr-300 is required for interaction with RASGAP. Phosphorylated on tyrosine residues by TEK/TIE2.

In terms of biological role, DOK proteins are enzymatically inert adaptor or scaffolding proteins. They provide a docking platform for the assembly of multimolecular signaling complexes. DOK2 may modulate the cellular proliferation induced by IL-4, as well as IL-2 and IL-3. May be involved in modulating Bcr-Abl signaling. Attenuates EGF-stimulated MAP kinase activation. This chain is Docking protein 2 (DOK2), found in Bos taurus (Bovine).